A 121-amino-acid polypeptide reads, in one-letter code: RING-box protein HRT1 (121 aa).

Residues 1-31 (MSNEVDRMDVDEDESQNIAQSSNQSAPVETK) are disordered. Ser15 bears the Phosphoserine mark. Positions 16 to 26 (QNIAQSSNQSA) are enriched in low complexity. Zn(2+) is bound by residues Cys55, Cys58, Cys66, Cys69, Cys81, Cys88, His90, His93, His95, Cys107, and Asp110. An RING-type zinc finger spans residues 55 to 111 (CAICRNHIMEPCIECQPKAMTDTDNECVAAWGVCNHAFHLHCINKWIKTRDACPLDN).

The protein belongs to the RING-box family. In terms of assembly, component of multiple cullin-RING ligases (CRLs) composed of 4 subunits: the RING protein HRT1, a cullin, a linker protein, and one of many alternative substrate receptors. Component of SCF E3 ubiquitin ligase complexes containing the cullin CDC53, the linker protein SKP1/CBF3D, and substrate receptors containing F-box motifs like DAS1 or GRR1. Component of RTT101(MMS1) E3 ubiquitin ligase complexes containing the cullin RTT101, the linker protein MMS1, and substrate receptors belonging to a protein family described as DCAF (DDB1- and CUL4-associated factor) like MMS22. Component of CRL3 E3 ubiquitin ligase complexes containing the cullin CUL3, the linker protein ELC1, and substrate receptors containing SOCS-box motifs like ELA1. Interacts with CDC53, CUL3, RTT101, CDC4 and CDC34/UBC3.

Its subcellular location is the cytoplasm. The protein resides in the nucleus. It functions in the pathway protein modification; protein ubiquitination. Core component of multiple cullin-RING-based E3 ubiquitin-protein ligase complexes (CRLs), which mediate the ubiquitination of target proteins. Recruits the E2 ubiquitin-conjugating enzyme CDC34/UBC3 to the complex and brings it into close proximity to the substrate. Also stimulates CDC34/UBC3 autoubiquitination and promotes the neddylation of CDC53 and RTT101. Component of the SCF(CDC4) ubiquitin ligase required for ubiquitination of the cyclin-dependent kinase inhibitor SIC1 and for the G1-to-S phase transition. Component of the RTT101(MMS1-MMS22) ubiquitin ligase that promotes fork progression through damaged DNA or natural pause sites. Component of the CRL3(ELA1) ubiquitin ligase required for ubiquitination of RPB1, the largest subunit of RNA polymerase II (Pol II), which targets Pol II for proteasomal degradation in DNA-damaged cells. The polypeptide is RING-box protein HRT1 (HRT1) (Saccharomyces cerevisiae (strain ATCC 204508 / S288c) (Baker's yeast)).